We begin with the raw amino-acid sequence, 290 residues long: Bifunctional protein FolD (290 aa).

Residues 167–169, Ser-192, and Ile-233 each bind NADP(+); that span reads GRS.

This sequence belongs to the tetrahydrofolate dehydrogenase/cyclohydrolase family. Homodimer.

The catalysed reaction is (6R)-5,10-methylene-5,6,7,8-tetrahydrofolate + NADP(+) = (6R)-5,10-methenyltetrahydrofolate + NADPH. It catalyses the reaction (6R)-5,10-methenyltetrahydrofolate + H2O = (6R)-10-formyltetrahydrofolate + H(+). Its pathway is one-carbon metabolism; tetrahydrofolate interconversion. Functionally, catalyzes the oxidation of 5,10-methylenetetrahydrofolate to 5,10-methenyltetrahydrofolate and then the hydrolysis of 5,10-methenyltetrahydrofolate to 10-formyltetrahydrofolate. This Gloeobacter violaceus (strain ATCC 29082 / PCC 7421) protein is Bifunctional protein FolD.